Consider the following 95-residue polypeptide: Protein RALF-like 16 (95 aa).

The signal sequence occupies residues 1-29 (MVAYEKSPIVFLFATMMLVMFLFCGSGEA). 2 disulfides stabilise this stretch: cysteine 45/cysteine 53 and cysteine 65/cysteine 71.

Belongs to the plant rapid alkalinization factor (RALF) family.

The protein localises to the secreted. Its function is as follows. Cell signaling peptide that may regulate plant stress, growth, and development. Mediates a rapid alkalinization of extracellular space by mediating a transient increase in the cytoplasmic Ca(2+) concentration leading to a calcium-dependent signaling events through a cell surface receptor and a concomitant activation of some intracellular mitogen-activated protein kinases. The sequence is that of Protein RALF-like 16 (RALFL16) from Arabidopsis thaliana (Mouse-ear cress).